Reading from the N-terminus, the 252-residue chain is Imidazole glycerol phosphate synthase subunit HisF (252 aa).

Catalysis depends on residues D11 and D130.

It belongs to the HisA/HisF family. In terms of assembly, heterodimer of HisH and HisF.

The protein localises to the cytoplasm. The catalysed reaction is 5-[(5-phospho-1-deoxy-D-ribulos-1-ylimino)methylamino]-1-(5-phospho-beta-D-ribosyl)imidazole-4-carboxamide + L-glutamine = D-erythro-1-(imidazol-4-yl)glycerol 3-phosphate + 5-amino-1-(5-phospho-beta-D-ribosyl)imidazole-4-carboxamide + L-glutamate + H(+). It participates in amino-acid biosynthesis; L-histidine biosynthesis; L-histidine from 5-phospho-alpha-D-ribose 1-diphosphate: step 5/9. Its function is as follows. IGPS catalyzes the conversion of PRFAR and glutamine to IGP, AICAR and glutamate. The HisF subunit catalyzes the cyclization activity that produces IGP and AICAR from PRFAR using the ammonia provided by the HisH subunit. This chain is Imidazole glycerol phosphate synthase subunit HisF, found in Desulforudis audaxviator (strain MP104C).